Here is a 942-residue protein sequence, read N- to C-terminus: DNA mismatch repair protein MSH2 (942 aa).

Position 667–674 (667–674 (GPNMGGKS)) interacts with ATP.

The protein belongs to the DNA mismatch repair MutS family. As to quaternary structure, heterodimer of MSH2 and MSH6 (GTBP).

The protein resides in the nucleus. Its function is as follows. Involved in postreplication mismatch repair. Binds specifically to DNA containing mismatched nucleotides thus providing a target for the excision repair processes characteristic of postreplication mismatch repair. The polypeptide is DNA mismatch repair protein MSH2 (MUS1) (Zea mays (Maize)).